A 30-amino-acid chain; its full sequence is XXVPYPRPFPRPPIGPRPLPFPGGGRPFQS.

A compositionally biased stretch (pro residues) spans 1–21 (XXVPYPRPFPRPPIGPRPLPF). The interval 1–30 (XXVPYPRPFPRPPIGPRPLPFPGGGRPFQS) is disordered.

To bovine bactenecin 7.

In terms of biological role, strong antimicrobial activity against P.immobilis and M.luteus, less active against E.coli D22. This is Antibacterial 6.5 kDa protein from Carcinus maenas (Common shore crab).